A 365-amino-acid chain; its full sequence is Peptide chain release factor 2 (365 aa).

An N5-methylglutamine modification is found at Q252.

The protein belongs to the prokaryotic/mitochondrial release factor family. In terms of processing, methylated by PrmC. Methylation increases the termination efficiency of RF2.

It is found in the cytoplasm. Functionally, peptide chain release factor 2 directs the termination of translation in response to the peptide chain termination codons UGA and UAA. The protein is Peptide chain release factor 2 of Yersinia enterocolitica serotype O:8 / biotype 1B (strain NCTC 13174 / 8081).